The sequence spans 254 residues: Acetylglutamate kinase (254 aa).

Substrate-binding positions include 40-41, arginine 62, and asparagine 154; that span reads GG.

The protein belongs to the acetylglutamate kinase family. ArgB subfamily.

The protein resides in the cytoplasm. It catalyses the reaction N-acetyl-L-glutamate + ATP = N-acetyl-L-glutamyl 5-phosphate + ADP. Its pathway is amino-acid biosynthesis; L-arginine biosynthesis; N(2)-acetyl-L-ornithine from L-glutamate: step 2/4. Functionally, catalyzes the ATP-dependent phosphorylation of N-acetyl-L-glutamate. The polypeptide is Acetylglutamate kinase (Staphylococcus aureus (strain Mu3 / ATCC 700698)).